A 360-amino-acid polypeptide reads, in one-letter code: S-adenosylmethionine:tRNA ribosyltransferase-isomerase (360 aa).

It belongs to the QueA family. Monomer.

It localises to the cytoplasm. The catalysed reaction is 7-aminomethyl-7-carbaguanosine(34) in tRNA + S-adenosyl-L-methionine = epoxyqueuosine(34) in tRNA + adenine + L-methionine + 2 H(+). The protein operates within tRNA modification; tRNA-queuosine biosynthesis. Functionally, transfers and isomerizes the ribose moiety from AdoMet to the 7-aminomethyl group of 7-deazaguanine (preQ1-tRNA) to give epoxyqueuosine (oQ-tRNA). In Rhodopseudomonas palustris (strain ATCC BAA-98 / CGA009), this protein is S-adenosylmethionine:tRNA ribosyltransferase-isomerase.